Here is a 491-residue protein sequence, read N- to C-terminus: Glutamyl-tRNA(Gln) amidotransferase subunit A (491 aa).

Residues lysine 80 and serine 155 each act as charge relay system in the active site. Serine 179 serves as the catalytic Acyl-ester intermediate.

The protein belongs to the amidase family. GatA subfamily. As to quaternary structure, heterotrimer of A, B and C subunits.

The catalysed reaction is L-glutamyl-tRNA(Gln) + L-glutamine + ATP + H2O = L-glutaminyl-tRNA(Gln) + L-glutamate + ADP + phosphate + H(+). Its function is as follows. Allows the formation of correctly charged Gln-tRNA(Gln) through the transamidation of misacylated Glu-tRNA(Gln) in organisms which lack glutaminyl-tRNA synthetase. The reaction takes place in the presence of glutamine and ATP through an activated gamma-phospho-Glu-tRNA(Gln). In Salinispora tropica (strain ATCC BAA-916 / DSM 44818 / JCM 13857 / NBRC 105044 / CNB-440), this protein is Glutamyl-tRNA(Gln) amidotransferase subunit A.